A 495-amino-acid chain; its full sequence is Autoinducer 2 import ATP-binding protein LsrA (495 aa).

ABC transporter domains are found at residues 5–233 (IEAH…TPVS) and 256–494 (AQDF…FGGQ). Residue 37-44 (GGNGAGKS) coordinates ATP.

The protein belongs to the ABC transporter superfamily. AI-2 autoinducer porter (TC 3.A.1.2.8) family. As to quaternary structure, the complex is composed of two ATP-binding proteins (LsrA), two transmembrane proteins (LsrC and LsrD) and a solute-binding protein (LsrB).

It localises to the cell inner membrane. It carries out the reaction ATP + H2O + (2R,4S)-2-methyl-2,3,3,4-tetrahydroxytetrahydrofuran-[AI-2-binding protein]Side 1 = ADP + phosphate + (2R,4S)-2-methyl-2,3,3,4-tetrahydroxytetrahydrofuranSide 2 + [AI-2-binding protein]Side 1.. Part of the ABC transporter complex LsrABCD involved in autoinducer 2 (AI-2) import. Responsible for energy coupling to the transport system. The protein is Autoinducer 2 import ATP-binding protein LsrA (lsrA) of Enterobacter sp. (strain 638).